We begin with the raw amino-acid sequence, 228 residues long: MLAKQFISKSLASSLRRLLPVSSTASSLKGSMMTIPKFTSIRTYTDSPEMPDFSEYQTKSTGDRSRVISYAMVGTMGALTAAGAQATVHDFLASWSASADVLAMSKAEVDLSKIPEGKNLVVKWQGKPVFIRHRTPEEIQEANSVDISTLRDPQADSDRVQKPEWLVMIGVCTHLGCVPIGEAGDYGGWFCPCHGSHYDISGRIRRGPAPLNLAIPAYTFEGSKIIIG.

The N-terminal 26 residues, 1 to 26, are a transit peptide targeting the mitochondrion; that stretch reads MLAKQFISKSLASSLRRLLPVSSTAS. The Mitochondrial matrix portion of the chain corresponds to 27–63; the sequence is SLKGSMMTIPKFTSIRTYTDSPEMPDFSEYQTKSTGD. Residues 64-93 form a helical membrane-spanning segment; it reads RSRVISYAMVGTMGALTAAGAQATVHDFLA. Over 94–228 the chain is Mitochondrial intermembrane; the sequence is SWSASADVLA…TFEGSKIIIG (135 aa). Residues 139 to 227 enclose the Rieske domain; it reads IQEANSVDIS…YTFEGSKIII (89 aa). [2Fe-2S] cluster-binding residues include Cys172, His174, Cys191, and His194. Cys177 and Cys193 are joined by a disulfide.

This sequence belongs to the Rieske iron-sulfur protein family. As to quaternary structure, component of the ubiquinol-cytochrome c oxidoreductase (cytochrome b-c1 complex, complex III, CIII), a multisubunit enzyme composed of 3 respiratory subunits cytochrome b, cytochrome c1 and Rieske protein, 2 core protein subunits, and additional low-molecular weight protein subunits. The complex exists as an obligatory dimer and forms supercomplexes (SCs) in the inner mitochondrial membrane with cytochrome c oxidase (complex IV, CIV). [2Fe-2S] cluster is required as a cofactor.

Its subcellular location is the mitochondrion inner membrane. It carries out the reaction a quinol + 2 Fe(III)-[cytochrome c](out) = a quinone + 2 Fe(II)-[cytochrome c](out) + 2 H(+)(out). In terms of biological role, component of the ubiquinol-cytochrome c oxidoreductase, a multisubunit transmembrane complex that is part of the mitochondrial electron transport chain which drives oxidative phosphorylation. The respiratory chain contains 3 multisubunit complexes succinate dehydrogenase (complex II, CII), ubiquinol-cytochrome c oxidoreductase (cytochrome b-c1 complex, complex III, CIII) and cytochrome c oxidase (complex IV, CIV), that cooperate to transfer electrons derived from NADH and succinate to molecular oxygen, creating an electrochemical gradient over the inner membrane that drives transmembrane transport and the ATP synthase. The cytochrome b-c1 complex catalyzes electron transfer from ubiquinol to cytochrome c, linking this redox reaction to translocation of protons across the mitochondrial inner membrane, with protons being carried across the membrane as hydrogens on the quinol. In the process called Q cycle, 2 protons are consumed from the matrix, 4 protons are released into the intermembrane space and 2 electrons are passed to cytochrome c. The Rieske protein is a catalytic core subunit containing a [2Fe-2S] iron-sulfur cluster. It cycles between 2 conformational states during catalysis to transfer electrons from the quinol bound in the Q(0) site in cytochrome b to cytochrome c1. This Schizosaccharomyces pombe (strain 972 / ATCC 24843) (Fission yeast) protein is Cytochrome b-c1 complex subunit Rieske, mitochondrial (rip1).